The sequence spans 169 residues: Crossover junction endodeoxyribonuclease RuvC (169 aa).

Active-site residues include aspartate 11, glutamate 71, and aspartate 143. Aspartate 11, glutamate 71, and aspartate 143 together coordinate Mg(2+).

The protein belongs to the RuvC family. Homodimer which binds Holliday junction (HJ) DNA. The HJ becomes 2-fold symmetrical on binding to RuvC with unstacked arms; it has a different conformation from HJ DNA in complex with RuvA. In the full resolvosome a probable DNA-RuvA(4)-RuvB(12)-RuvC(2) complex forms which resolves the HJ. Mg(2+) serves as cofactor.

It localises to the cytoplasm. It catalyses the reaction Endonucleolytic cleavage at a junction such as a reciprocal single-stranded crossover between two homologous DNA duplexes (Holliday junction).. In terms of biological role, the RuvA-RuvB-RuvC complex processes Holliday junction (HJ) DNA during genetic recombination and DNA repair. Endonuclease that resolves HJ intermediates. Cleaves cruciform DNA by making single-stranded nicks across the HJ at symmetrical positions within the homologous arms, yielding a 5'-phosphate and a 3'-hydroxyl group; requires a central core of homology in the junction. The consensus cleavage sequence is 5'-(A/T)TT(C/G)-3'. Cleavage occurs on the 3'-side of the TT dinucleotide at the point of strand exchange. HJ branch migration catalyzed by RuvA-RuvB allows RuvC to scan DNA until it finds its consensus sequence, where it cleaves and resolves the cruciform DNA. The sequence is that of Crossover junction endodeoxyribonuclease RuvC from Rhizobium etli (strain CIAT 652).